Reading from the N-terminus, the 742-residue chain is Photosystem I P700 chlorophyll a apoprotein A2 (742 aa).

8 consecutive transmembrane segments (helical) span residues 46-69 (LFST…FHIA), 135-158 (LFQA…LHLQ), 175-199 (LNHH…HVAI), 273-291 (IAHH…GHMY), 336-359 (LHFQ…QHMG), 375-401 (SALY…IFFV), 423-445 (ALIS…IYVH), and 525-543 (FLVH…LILI). C567 and C576 together coordinate [4Fe-4S] cluster. Helical transmembrane passes span 583-604 (AMYL…YWHW) and 651-673 (LSVW…MFLI). The divinyl chlorophyll a site is built by H662, M670, and Y678. Position 679 (W679) interacts with phylloquinone. The chain crosses the membrane as a helical span at residues 715–735 (LVGLAHFTIGNILTFGAFVIA).

The protein belongs to the PsaA/PsaB family. As to quaternary structure, the PsaA/B heterodimer binds the P700 divinyl chlorophyll special pair and subsequent electron acceptors. PSI consists of a core antenna complex that captures photons, and an electron transfer chain that converts photonic excitation into a charge separation. The cyanobacterial PSI reaction center is composed of one copy each of PsaA,B,C,D,E,F,I,J,K,L,M and X, and forms trimeric complexes. The cofactor is PSI electron transfer chain: 5 divinyl chlorophyll a, 1 divinyl chlorophyll a', 2 phylloquinones and 3 4Fe-4S clusters. PSI core antenna: 90 divinyl chlorophyll a, 22 carotenoids, 3 phospholipids and 1 galactolipid. P700 is a divinyl chlorophyll a/divinyl chlorophyll a' dimer, A0 is one or more divinyl chlorophyll a, A1 is one or both phylloquinones and FX is a shared 4Fe-4S iron-sulfur center..

The protein localises to the cellular thylakoid membrane. It carries out the reaction reduced [plastocyanin] + hnu + oxidized [2Fe-2S]-[ferredoxin] = oxidized [plastocyanin] + reduced [2Fe-2S]-[ferredoxin]. Its function is as follows. PsaA and PsaB bind P700, the primary electron donor of photosystem I (PSI), as well as the electron acceptors A0, A1 and FX. PSI is a plastocyanin/cytochrome c6-ferredoxin oxidoreductase, converting photonic excitation into a charge separation, which transfers an electron from the donor P700 chlorophyll pair to the spectroscopically characterized acceptors A0, A1, FX, FA and FB in turn. Oxidized P700 is reduced on the lumenal side of the thylakoid membrane by plastocyanin or cytochrome c6. The sequence is that of Photosystem I P700 chlorophyll a apoprotein A2 from Prochlorococcus marinus subsp. pastoris (strain CCMP1986 / NIES-2087 / MED4).